Consider the following 341-residue polypeptide: Small ribosomal subunit biogenesis GTPase RsgA (341 aa).

The 157-residue stretch at arginine 112–leucine 268 folds into the CP-type G domain. Residues threonine 157–aspartate 160 and glycine 210–threonine 218 contribute to the GTP site. Positions 290, 295, 297, and 303 each coordinate Zn(2+).

It belongs to the TRAFAC class YlqF/YawG GTPase family. RsgA subfamily. Monomer. Associates with 30S ribosomal subunit, binds 16S rRNA. Zn(2+) serves as cofactor.

It is found in the cytoplasm. In terms of biological role, one of several proteins that assist in the late maturation steps of the functional core of the 30S ribosomal subunit. Helps release RbfA from mature subunits. May play a role in the assembly of ribosomal proteins into the subunit. Circularly permuted GTPase that catalyzes slow GTP hydrolysis, GTPase activity is stimulated by the 30S ribosomal subunit. This chain is Small ribosomal subunit biogenesis GTPase RsgA, found in Xylella fastidiosa (strain Temecula1 / ATCC 700964).